The chain runs to 398 residues: Acetate kinase (398 aa).

Residue Asn-7 participates in Mg(2+) binding. Residue Lys-14 participates in ATP binding. Residue Arg-91 coordinates substrate. The Proton donor/acceptor role is filled by Asp-148. Residues 208 to 212, 283 to 285, and 331 to 335 each bind ATP; these read HLGNG, DSR, and GIGEN. Glu-384 contacts Mg(2+).

Belongs to the acetokinase family. As to quaternary structure, homodimer. It depends on Mg(2+) as a cofactor. Requires Mn(2+) as cofactor.

Its subcellular location is the cytoplasm. It catalyses the reaction acetate + ATP = acetyl phosphate + ADP. Its pathway is metabolic intermediate biosynthesis; acetyl-CoA biosynthesis; acetyl-CoA from acetate: step 1/2. In terms of biological role, catalyzes the formation of acetyl phosphate from acetate and ATP. Can also catalyze the reverse reaction. This Halothermothrix orenii (strain H 168 / OCM 544 / DSM 9562) protein is Acetate kinase.